The chain runs to 145 residues: CASP-like protein SELMODRAFT_406854 (145 aa).

At 1 to 31 the chain is on the cytoplasmic side; it reads MGVASQSSVANEAGAAPEASIQQTLRGFSSP. A helical transmembrane segment spans residues 32–52; it reads TSLLLRIATAVLCTLTLAFLV. At 53-75 the chain is on the extracellular side; the sequence is TSKERKEIASIDIVAIWSNSKAL. Residues 76–96 traverse the membrane as a helical segment; sequence IFLAVVSGICLGYSLLHAAVF. Residues 97-112 are Cytoplasmic-facing; the sequence is LVMLSGNRKPLARKKA. The chain crosses the membrane as a helical span at residues 113–133; the sequence is LDWMVFLADQVFFKIFCWFSI. At 134-145 the chain is on the extracellular side; that stretch reads RVSSRRSKAGFV.

It belongs to the Casparian strip membrane proteins (CASP) family. Homodimer and heterodimers.

The protein resides in the cell membrane. This chain is CASP-like protein SELMODRAFT_406854, found in Selaginella moellendorffii (Spikemoss).